We begin with the raw amino-acid sequence, 313 residues long: NADH-ubiquinone oxidoreductase chain 1 (313 aa).

The next 8 membrane-spanning stretches (helical) occupy residues 2-22, 72-92, 102-122, 148-168, 173-193, 222-244, 249-268, and 293-313; these read ILSV…VAFL, VFFF…MPVP, FAVL…MASG, LGLI…AQFF, EVML…STVA, FALF…ALLF, FSLL…YLWF, and LGLL…GGGL.

Belongs to the complex I subunit 1 family.

The protein resides in the mitochondrion inner membrane. The catalysed reaction is a ubiquinone + NADH + 5 H(+)(in) = a ubiquinol + NAD(+) + 4 H(+)(out). In terms of biological role, core subunit of the mitochondrial membrane respiratory chain NADH dehydrogenase (Complex I) that is believed to belong to the minimal assembly required for catalysis. Complex I functions in the transfer of electrons from NADH to the respiratory chain. The immediate electron acceptor for the enzyme is believed to be ubiquinone. The protein is NADH-ubiquinone oxidoreductase chain 1 (ND1) of Branchiostoma lanceolatum (Common lancelet).